Here is a 64-residue protein sequence, read N- to C-terminus: Peptide Ctri9677 (64 aa).

The signal sequence occupies residues 1–22 (MKNNTILFTFLIVFLIASQIEA). A Leucine amide modification is found at leucine 36. A propeptide spanning residues 40–64 (SEDREFFDFFTDDNLAALEKALKEY) is cleaved from the precursor.

Belongs to the non-disulfide-bridged peptide (NDBP) superfamily. Short antimicrobial peptide (group 4) family. As to expression, expressed by the venom gland.

Its subcellular location is the secreted. Functionally, antimicrobial peptide. The protein is Peptide Ctri9677 of Chaerilus tricostatus (Scorpion).